We begin with the raw amino-acid sequence, 427 residues long: Tol-Pal system protein TolB (427 aa).

An N-terminal signal peptide occupies residues 1 to 25; sequence MKTFAQLRLLLAAAALALLSFSAQA.

This sequence belongs to the TolB family. As to quaternary structure, the Tol-Pal system is composed of five core proteins: the inner membrane proteins TolA, TolQ and TolR, the periplasmic protein TolB and the outer membrane protein Pal. They form a network linking the inner and outer membranes and the peptidoglycan layer.

The protein localises to the periplasm. In terms of biological role, part of the Tol-Pal system, which plays a role in outer membrane invagination during cell division and is important for maintaining outer membrane integrity. This chain is Tol-Pal system protein TolB, found in Azoarcus sp. (strain BH72).